The following is a 307-amino-acid chain: Transcription initiation factor IIB 5 (307 aa).

Residues 19–47 form a TFIIB-type zinc finger; sequence TTEPCPECGGPVRTNSAETVCADCGLIID. Positions 23, 26, 39, and 42 each coordinate Zn(2+). 2 stretches are compositionally biased toward basic and acidic residues: residues 54–66 and 107–121; these read GPEW…DTAK and MRRE…STKE. The tract at residues 54-121 is disordered; it reads GPEWHRDDAD…SRGRWRSTKE (68 aa). 2 repeat units span residues 129-212 and 223-304.

The protein belongs to the TFIIB family.

Stabilizes TBP binding to an archaeal box-A promoter. Also responsible for recruiting RNA polymerase II to the pre-initiation complex (DNA-TBP-TFIIB). This Halobacterium salinarum (strain ATCC 700922 / JCM 11081 / NRC-1) (Halobacterium halobium) protein is Transcription initiation factor IIB 5.